We begin with the raw amino-acid sequence, 545 residues long: Tripartite motif-containing 55 (545 aa).

The RING-type zinc finger occupies 26–82; that stretch reads CPICLEMFTKPVVILPCQHNLCRKCASDIFQASNPYLPTRGGTTVASGGRFRCPSCR. Residues 119–161 form a B box-type zinc finger; that stretch reads LDQPMCEEHEEERINIYCLNCEVPTCSLCKVFGAHKDCQVAPL. Zn(2+)-binding residues include Cys124, His127, Cys147, and His153. The region spanning 269–327 is the COS domain; sequence MDEPEMAVFLQNAKTLLQKIVEASKAFQMEKLEQGYEIMSNFTVNLNREEKIIREIDFS. Disordered stretches follow at residues 324–352, 359–378, and 417–532; these read IDFS…VEVE, IASS…SQLP, and SQQT…EPAR. Residues 328-352 show a composition bias toward acidic residues; the sequence is REEEEEEDAGEIDEEGEGEDAVEVE. The segment covering 417–428 has biased composition (polar residues); that stretch reads SQQTTQSETSGP. The segment covering 474–485 has biased composition (low complexity); that stretch reads SSVQSAEVAEAA. Positions 486 to 506 are enriched in polar residues; the sequence is TNEQAAVSGKESSSTAATSQI.

Post-translationally, targeted for degradation through the proteasomal and lysosomal pathways in the presence of SUMO3. Widely expressed in various tissues, besides skeletal muscle and heart, such as brain, lung, liver, spleen and kidney.

The protein localises to the nucleus. Its subcellular location is the cytoplasm. It catalyses the reaction S-ubiquitinyl-[E2 ubiquitin-conjugating enzyme]-L-cysteine + [acceptor protein]-L-lysine = [E2 ubiquitin-conjugating enzyme]-L-cysteine + N(6)-ubiquitinyl-[acceptor protein]-L-lysine.. In terms of biological role, E3 ubiquitin ligase that plays an important role in regulating cardiac development and contractility, muscle growth, metabolism, and fiber-type differentiation. Acts as a critical factor that regulates cardiomyocyte size during development in concert with TRIM63 by regulating E2F1-mediated gene expression. Plays a role in apoptosis induction in cardiomyocytes by promoting ubiquitination of the DUSP1 phosphatase. Promotes non-canonical NF-kappa-B signaling and B-cell-mediated immune responses by mediating NFKB2 'Lys-48'-linked ubiquitination and processing. In turn, NFKB2 is further processed by valosin-containing protein/VCP, an ATPase that mediates ubiquitin-dependent protein degradation by the proteasome. May play a role in preventing macrophages from producing inflammatory factors and migrating by downregulating the level of nuclear NF-kappa-B subunit RELA. Modifies also PPARG via polyubiquitination and accelerates PPARG proteasomal degradation to inhibit its activity. The polypeptide is Tripartite motif-containing 55 (Trim55) (Mus musculus (Mouse)).